The chain runs to 475 residues: CAAX prenyl protease 1 homolog (475 aa).

The Lumenal segment spans residues 1 to 18 (MGMWASLDALWEMPAEKR). Residues 19 to 39 (IFGAVLLFSWTVYLWETFLAQ) traverse the membrane as a helical segment. The Nuclear segment spans residues 40 to 81 (RQRRIYKTTTHVPPELGQIMDSETFEKSRLYQLDKSTFSFWS). The helical transmembrane segment at 82–102 (GLYSETEGTLILLFGGIPYLW) threads the bilayer. Topologically, residues 103-123 (RLSGRFCGYAGFGPEYEITQS) are lumenal. A helical membrane pass occupies residues 124 to 144 (LVFLLLATLFSALTGLPWSLY). The Nuclear segment spans residues 145-170 (NTFVIEEKHGFNQQTLGFFMKDAIKK). The helical transmembrane segment at 171 to 191 (FVVTQCILLPVSSLLLYIIKI) threads the bilayer. The Lumenal segment spans residues 192 to 195 (GGDY). Residues 196 to 216 (FFIYAWLFTLVVSLVLVTIYA) form a helical membrane-spanning segment. The Nuclear segment spans residues 217 to 347 (DYIAPLFDKF…GHWKLGHTVK (131 aa)). Histidine 335 is a Zn(2+) binding site. Glutamate 336 is an active-site residue. Histidine 339 serves as a coordination point for Zn(2+). The helical transmembrane segment at 348 to 368 (NIIISQMNSFLCFFLFAVLIG) threads the bilayer. The Lumenal portion of the chain corresponds to 369–382 (RKELFAAFGFYDSQ). Residues 383–405 (PTLIGLLIIFQFIFSPYNEVLSF) traverse the membrane as a helical segment. The Nuclear portion of the chain corresponds to 406 to 475 (CLTVLSRRFE…LQALKTMKQH (70 aa)). Glutamate 415 contacts Zn(2+).

It belongs to the peptidase M48A family. It depends on Zn(2+) as a cofactor. In terms of tissue distribution, widely expressed. High levels in kidney, prostate, testis and ovary.

It is found in the endoplasmic reticulum membrane. The protein resides in the nucleus inner membrane. It localises to the early endosome membrane. The protein localises to the late endosome membrane. It carries out the reaction Hydrolyzes the peptide bond -P2-(S-farnesyl or geranylgeranyl)C-P1'-P2'-P3'-COOH where P1' and P2' are amino acids with aliphatic side chains and P3' is any C-terminal residue.. Transmembrane metalloprotease whose catalytic activity is critical for processing lamin A/LMNA on the inner nuclear membrane and clearing clogged translocons on the endoplasmic reticulum. Proteolytically removes the C-terminal three residues of farnesylated proteins. Also plays an antiviral role independently of its protease activity by restricting enveloped RNA and DNA viruses, including influenza A, Zika, Ebola, Sindbis, vesicular stomatitis, cowpox, and vaccinia. Mechanistically, controls IFITM antiviral pathway to hinder viruses from breaching the endosomal barrier by modulating membrane fluidity. In Homo sapiens (Human), this protein is CAAX prenyl protease 1 homolog.